We begin with the raw amino-acid sequence, 368 residues long: H-2 class I histocompatibility antigen, K-D alpha chain (368 aa).

A signal peptide spans 1–21 (MAPCTLLLLLAAALAPTQTRA). Residues 22-111 (GPHSLRYFVT…AQRYYNQSKG (90 aa)) are alpha-1. The Extracellular segment spans residues 22 to 305 (GPHSLRYFVT…KLPPSTVSNT (284 aa)). The N-linked (GlcNAc...) asparagine glycan is linked to N107. The interval 112-203 (GSHTFQRMFG…ELGNETLLRT (92 aa)) is alpha-2. C122 and C185 are disulfide-bonded. N-linked (GlcNAc...) asparagine glycosylation is found at N197 and N277. Residues 204–295 (DSPKAHVTYH…GLPEPLTLRW (92 aa)) are alpha-3. One can recognise an Ig-like C1-type domain in the interval 206-294 (PKAHVTYHPR…KGLPEPLTLR (89 aa)). Cysteines 224 and 280 form a disulfide. The interval 296-305 (KLPPSTVSNT) is connecting peptide. A helical transmembrane segment spans residues 306-328 (VIIAVLVVLGAAIVTGAVVAFVM). The Cytoplasmic segment spans residues 329-368 (KMRRNTGGKGVNYALAPGSQTSDLSLPDGKVMVHDPHSLA). Phosphoserine is present on residues S350 and S353.

The protein belongs to the MHC class I family. As to quaternary structure, heterodimer of an alpha chain and a beta chain (beta-2-microglobulin).

Its subcellular location is the membrane. In terms of biological role, involved in the presentation of foreign antigens to the immune system. In Mus musculus (Mouse), this protein is H-2 class I histocompatibility antigen, K-D alpha chain (H2-K1).